The chain runs to 262 residues: Type III pantothenate kinase (262 aa).

7–14 serves as a coordination point for ATP; sequence DIGNTRLK. Residues tyrosine 96 and 103 to 106 each bind substrate; that span reads GSDR. Aspartate 105 (proton acceptor) is an active-site residue. Threonine 137 serves as a coordination point for ATP. Substrate is bound at residue threonine 187.

This sequence belongs to the type III pantothenate kinase family. In terms of assembly, homodimer. Requires NH4(+) as cofactor. It depends on K(+) as a cofactor.

It is found in the cytoplasm. It carries out the reaction (R)-pantothenate + ATP = (R)-4'-phosphopantothenate + ADP + H(+). Its pathway is cofactor biosynthesis; coenzyme A biosynthesis; CoA from (R)-pantothenate: step 1/5. Catalyzes the phosphorylation of pantothenate (Pan), the first step in CoA biosynthesis. The sequence is that of Type III pantothenate kinase from Leptothrix cholodnii (strain ATCC 51168 / LMG 8142 / SP-6) (Leptothrix discophora (strain SP-6)).